A 162-amino-acid polypeptide reads, in one-letter code: Peroxiredoxin-2 (162 aa).

Residues 4 to 162 enclose the Thioredoxin domain; that stretch reads IAVGDVLPDG…SSADDILKDL (159 aa). Cys51 serves as the catalytic Cysteine sulfenic acid (-SOH) intermediate.

This sequence belongs to the peroxiredoxin family. Prx5 subfamily. As to quaternary structure, monomer. Homodimer. Glutathionylation of C(P) causes the dimer to dissociate. Subsequent reduction of the mixed disulfide bond leads again to dimerization.

It carries out the reaction [glutaredoxin]-dithiol + a hydroperoxide = [glutaredoxin]-disulfide + an alcohol + H2O. In terms of biological role, thiol-specific peroxidase that catalyzes the reduction of hydrogen peroxide and organic hydroperoxides to water and alcohols, respectively. Can reduce H(2)O(2) and short chain organic, fatty acid, and phospholipid hydroperoxides. Plays a role in cell protection against oxidative stress by detoxifying peroxides. This Populus trichocarpa (Western balsam poplar) protein is Peroxiredoxin-2.